The primary structure comprises 323 residues: Thymidylate synthase (323 aa).

DUMP is bound by residues R21 and 172–173 (RR). Catalysis depends on C192, which acts as the Nucleophile. DUMP contacts are provided by residues 214–217 (RSND), N225, and 255–257 (HVY). (6R)-5,10-methylene-5,6,7,8-tetrahydrofolate is bound at residue D217. A322 contacts (6R)-5,10-methylene-5,6,7,8-tetrahydrofolate.

It belongs to the thymidylate synthase family. Bacterial-type ThyA subfamily. In terms of assembly, homodimer.

It localises to the cytoplasm. It catalyses the reaction dUMP + (6R)-5,10-methylene-5,6,7,8-tetrahydrofolate = 7,8-dihydrofolate + dTMP. It participates in pyrimidine metabolism; dTTP biosynthesis. Functionally, catalyzes the reductive methylation of 2'-deoxyuridine-5'-monophosphate (dUMP) to 2'-deoxythymidine-5'-monophosphate (dTMP) while utilizing 5,10-methylenetetrahydrofolate (mTHF) as the methyl donor and reductant in the reaction, yielding dihydrofolate (DHF) as a by-product. This enzymatic reaction provides an intracellular de novo source of dTMP, an essential precursor for DNA biosynthesis. In Bordetella parapertussis (strain 12822 / ATCC BAA-587 / NCTC 13253), this protein is Thymidylate synthase.